A 145-amino-acid chain; its full sequence is Cystin-1 (145 aa).

The disordered stretch occupies residues 1–129; sequence MGSGSSRSGR…PEGQSAISYD (129 aa). A lipid anchor (N-myristoyl glycine) is attached at glycine 2. The short motif at 29–33 is the Ciliary targeting motif element; that stretch reads ASEGG. Position 116 is a phosphoserine (serine 116).

Interacts (when myristoylated) with UNC119 and UNC119B; interaction is required for localization to cilium. As to expression, expressed primarily in the kidney and liver. Expressed at lower levels in the lung, brain and heart.

The protein resides in the cell projection. It localises to the cilium membrane. Its subcellular location is the cytoplasm. The protein localises to the cytoskeleton. It is found in the cilium axoneme. The chain is Cystin-1 (Cys1) from Mus musculus (Mouse).